The sequence spans 174 residues: Bifunctional protein PyrR (174 aa).

Residues 97-109 carry the PRPP-binding motif; that stretch reads VVIVDDVLYTGRT.

It belongs to the purine/pyrimidine phosphoribosyltransferase family. PyrR subfamily. As to quaternary structure, homodimer and homohexamer; in equilibrium.

The catalysed reaction is UMP + diphosphate = 5-phospho-alpha-D-ribose 1-diphosphate + uracil. Its function is as follows. Regulates transcriptional attenuation of the pyrimidine nucleotide (pyr) operon by binding in a uridine-dependent manner to specific sites on pyr mRNA. This disrupts an antiterminator hairpin in the RNA and favors formation of a downstream transcription terminator, leading to a reduced expression of downstream genes. Also displays a weak uracil phosphoribosyltransferase activity which is not physiologically significant. This is Bifunctional protein PyrR from Macrococcus caseolyticus (strain JCSC5402) (Macrococcoides caseolyticum).